A 258-amino-acid chain; its full sequence is UPF0246 protein PM0066 (258 aa).

This sequence belongs to the UPF0246 family.

The sequence is that of UPF0246 protein PM0066 from Pasteurella multocida (strain Pm70).